The sequence spans 469 residues: Neuraminidase (469 aa).

Topologically, residues 1–9 (MNPNQKIIT) are intravirion. A helical membrane pass occupies residues 10–30 (IGSVSLTIATVCFLMQIAILV). The tract at residues 11 to 33 (GSVSLTIATVCFLMQIAILVTTV) is involved in apical transport and lipid raft association. The Virion surface portion of the chain corresponds to 31–469 (TTVTLHFKQH…DGANINFMPI (439 aa)). Positions 36–88 (HFKQHECDSPASNQVMPCEPIIIERNITEIVYLNNTTIEKEICPKVVEYRNWS) are hypervariable stalk region. Asn-61, Asn-69, Asn-70, and Asn-86 each carry an N-linked (GlcNAc...) asparagine; by host glycan. A head of neuraminidase region spans residues 91–469 (QCQITGFAPF…DGANINFMPI (379 aa)). Cystine bridges form between Cys-92-Cys-417, Cys-124-Cys-129, Cys-175-Cys-193, Cys-183-Cys-230, Cys-232-Cys-237, Cys-278-Cys-291, Cys-280-Cys-289, Cys-318-Cys-337, and Cys-421-Cys-447. Substrate is bound at residue Arg-118. The N-linked (GlcNAc...) asparagine; by host glycan is linked to Asn-146. Asp-151 serves as the catalytic Proton donor/acceptor. Residue Arg-152 participates in substrate binding. Residues Asn-200 and Asn-234 are each glycosylated (N-linked (GlcNAc...) asparagine; by host). 276 to 277 (EE) is a binding site for substrate. Residue Arg-292 participates in substrate binding. Residues Asp-293, Gly-297, and Asp-324 each coordinate Ca(2+). Residues 324 to 349 (DTPRNDDRSSNSNCRNPNNERGTQGV) form a disordered region. The segment covering 333-342 (SNSNCRNPNN) has biased composition (low complexity). Ca(2+) contacts are provided by Gly-345, Thr-346, and Gln-347. Arg-371 contacts substrate. Asn-402 carries N-linked (GlcNAc...) asparagine; by host glycosylation. Tyr-406 (nucleophile) is an active-site residue.

Belongs to the glycosyl hydrolase 34 family. As to quaternary structure, homotetramer. It depends on Ca(2+) as a cofactor. In terms of processing, N-glycosylated.

It localises to the virion membrane. The protein localises to the host apical cell membrane. It catalyses the reaction Hydrolysis of alpha-(2-&gt;3)-, alpha-(2-&gt;6)-, alpha-(2-&gt;8)- glycosidic linkages of terminal sialic acid residues in oligosaccharides, glycoproteins, glycolipids, colominic acid and synthetic substrates.. Its activity is regulated as follows. Inhibited by the neuraminidase inhibitors zanamivir (Relenza) and oseltamivir (Tamiflu). These drugs interfere with the release of progeny virus from infected cells and are effective against all influenza strains. Resistance to neuraminidase inhibitors is quite rare. In terms of biological role, catalyzes the removal of terminal sialic acid residues from viral and cellular glycoconjugates. Cleaves off the terminal sialic acids on the glycosylated HA during virus budding to facilitate virus release. Additionally helps virus spread through the circulation by further removing sialic acids from the cell surface. These cleavages prevent self-aggregation and ensure the efficient spread of the progeny virus from cell to cell. Otherwise, infection would be limited to one round of replication. Described as a receptor-destroying enzyme because it cleaves a terminal sialic acid from the cellular receptors. May facilitate viral invasion of the upper airways by cleaving the sialic acid moieties on the mucin of the airway epithelial cells. Likely to plays a role in the budding process through its association with lipid rafts during intracellular transport. May additionally display a raft-association independent effect on budding. Plays a role in the determination of host range restriction on replication and virulence. Sialidase activity in late endosome/lysosome traffic seems to enhance virus replication. This chain is Neuraminidase, found in Aves (Human).